The sequence spans 657 residues: Pentatricopeptide repeat-containing protein CRR2, chloroplastic (657 aa).

A chloroplast-targeting transit peptide spans 1-51; it reads MFLSHPPQVIQPTYHTVNFLPRSPLKPPSCSVALNNPSISSGAGAKISNNQ. PPR repeat units follow at residues 45–75, 76–110, 111–141, 142–176, 177–215, 216–246, 247–277, 284–318, 319–349, 350–384, 385–420, and 421–451; these read AKIS…ESSP, SQQT…GSDQ, DPFL…TRKR, TIYV…GVES, DRFT…GYSS, HVYI…MPVR, NVVS…MMRE, NSVT…GLDS, ILPV…MHDR, DVVS…GASP, TPVT…GIKP, and QIEH…MRTE. A type E motif region spans residues 456–531; that stretch reads VWGSLLGSCR…LPGRCWMEVR (76 aa). The tract at residues 532–562 is type E(+) motif; that stretch reads RKMYSFVSVDEFNPLMEQIHAFLVKLAEDMK. Residues 563–657 form a type DYW motif region; it reads EKGYIPQTKG…NGVCSCGDYW (95 aa).

It belongs to the PPR family. PCMP-H subfamily.

The protein localises to the plastid. The protein resides in the chloroplast. Its function is as follows. Required for the intergenic processing between chloroplast rsp7 and ndhB transcripts. Necessary for chloroplast NADH dehydrogenase-like (NDH) complex-dependent cyclic electron transport around PSI (CET). This is Pentatricopeptide repeat-containing protein CRR2, chloroplastic from Arabidopsis thaliana (Mouse-ear cress).